The sequence spans 319 residues: Ribonuclease Z (319 aa).

Zn(2+) is bound by residues His62, His64, Asp66, His67, His145, Asp215, and His273. Asp66 (proton acceptor) is an active-site residue.

Belongs to the RNase Z family. In terms of assembly, homodimer. Requires Zn(2+) as cofactor.

It catalyses the reaction Endonucleolytic cleavage of RNA, removing extra 3' nucleotides from tRNA precursor, generating 3' termini of tRNAs. A 3'-hydroxy group is left at the tRNA terminus and a 5'-phosphoryl group is left at the trailer molecule.. Its function is as follows. Zinc phosphodiesterase, which displays some tRNA 3'-processing endonuclease activity. Probably involved in tRNA maturation, by removing a 3'-trailer from precursor tRNA. The polypeptide is Ribonuclease Z (Borreliella afzelii (strain PKo) (Borrelia afzelii)).